Here is a 99-residue protein sequence, read N- to C-terminus: Large ribosomal subunit protein bL21 (99 aa).

This sequence belongs to the bacterial ribosomal protein bL21 family. In terms of assembly, part of the 50S ribosomal subunit. Contacts protein L20.

Functionally, this protein binds to 23S rRNA in the presence of protein L20. This Acholeplasma laidlawii (strain PG-8A) protein is Large ribosomal subunit protein bL21.